The sequence spans 169 residues: Actin-related protein 2/3 complex subunit 4 (169 aa).

It belongs to the ARPC4 family. As to quaternary structure, component of the Arp2/3 complex composed of arpB/Arp2, arpC/Arp3, arcA/p41-arc, arcB/p34-arc, arcC/p21-arc, arcD/p20-arc and arcE/p16-arc. Interacts with carmil (via the region between the LRR domain and COOH-terminal proline-rich domain); carmil is required for Arp2/3-dependent actin nucleation. Arp2/3 complex, MyoB, MyoC, and the alpha and beta subunits of capping protein all form a larger complex with carmil.

It localises to the cytoplasm. The protein localises to the cytoskeleton. The protein resides in the cytosol. Its subcellular location is the cell cortex. It is found in the cell projection. It localises to the pseudopodium. In terms of biological role, functions as a component of the Arp2/3 complex which is involved in regulation of actin polymerization and together with an activating nucleation-promoting factor (NPF) mediates the formation of branched actin networks. Seems to contact the pointed end of the daughter actin filament. The Arp2/3 complex is involved in organizing the actin system in cell motility and chemotaxis, in phagocytosis and macropinocytosis, at late steps of endosome processing, and in mitosis. In concert with a group of other proteins, the Arp2/3 complex plays a general role in the rapid activation and adaptation of the actin system to its multiple functions. This is Actin-related protein 2/3 complex subunit 4 (arcD) from Dictyostelium discoideum (Social amoeba).